Consider the following 180-residue polypeptide: Pro-glucagon (180 aa).

Positions 1–20 (MKTIYFVAGLFVMLVQGSWQ) are cleaved as a signal peptide. Residues 25–59 (NTEEKSRSFPAPQTDPLDDPDQMTEDKRHSQGTFT) are disordered. Phosphoserine is present on Ser-54. The propeptide occupies 84–89 (NKNNIA). Residues Ser-105 and Ser-108 each carry the phosphoserine modification. An Arginine amide modification is found at Arg-127. Positions 131–145 (DFPEEVTIVEELRRR) are excised as a propeptide. Phosphoserine occurs at positions 150 and 152.

The protein belongs to the glucagon family. Proglucagon is post-translationally processed in a tissue-specific manner in pancreatic A cells and intestinal L cells. In pancreatic A cells, the major bioactive hormone is glucagon cleaved by PCSK2/PC2. In the intestinal L cells PCSK1/PC1 liberates GLP-1, GLP-2, glicentin and oxyntomodulin. GLP-1 is further N-terminally truncated by post-translational processing in the intestinal L cells resulting in GLP-1(7-37) GLP-1-(7-36)amide. The C-terminal amidation is neither important for the metabolism of GLP-1 nor for its effects on the endocrine pancreas. Glucagon is secreted in the A cells of the islets of Langerhans. GLP-1, GLP-2, oxyntomodulin and glicentin are secreted from enteroendocrine cells throughout the gastrointestinal tract. GLP-1 and GLP-2 are also secreted in selected neurons in the brain.

It is found in the secreted. Plays a key role in glucose metabolism and homeostasis. Regulates blood glucose by increasing gluconeogenesis and decreasing glycolysis. A counterregulatory hormone of insulin, raises plasma glucose levels in response to insulin-induced hypoglycemia. Plays an important role in initiating and maintaining hyperglycemic conditions in diabetes. Its function is as follows. Potent stimulator of glucose-dependent insulin release. Also stimulates insulin release in response to IL6. Plays important roles on gastric motility and the suppression of plasma glucagon levels. May be involved in the suppression of satiety and stimulation of glucose disposal in peripheral tissues, independent of the actions of insulin. Has growth-promoting activities on intestinal epithelium. May also regulate the hypothalamic pituitary axis (HPA) via effects on LH, TSH, CRH, oxytocin, and vasopressin secretion. Increases islet mass through stimulation of islet neogenesis and pancreatic beta cell proliferation. Inhibits beta cell apoptosis. In terms of biological role, stimulates intestinal growth and up-regulates villus height in the small intestine, concomitant with increased crypt cell proliferation and decreased enterocyte apoptosis. The gastrointestinal tract, from the stomach to the colon is the principal target for GLP-2 action. Plays a key role in nutrient homeostasis, enhancing nutrient assimilation through enhanced gastrointestinal function, as well as increasing nutrient disposal. Stimulates intestinal glucose transport and decreases mucosal permeability. Functionally, significantly reduces food intake. Inhibits gastric emptying in humans. Suppression of gastric emptying may lead to increased gastric distension, which may contribute to satiety by causing a sensation of fullness. May modulate gastric acid secretion and the gastro-pyloro-duodenal activity. May play an important role in intestinal mucosal growth in the early period of life. The chain is Pro-glucagon (GCG) from Sus scrofa (Pig).